A 205-amino-acid chain; its full sequence is Ribosomal RNA small subunit methyltransferase G (205 aa).

S-adenosyl-L-methionine-binding positions include Gly-76, Leu-81, 127 to 128, and Arg-140; that span reads IE.

The protein belongs to the methyltransferase superfamily. RNA methyltransferase RsmG family.

The protein localises to the cytoplasm. It catalyses the reaction guanosine(527) in 16S rRNA + S-adenosyl-L-methionine = N(7)-methylguanosine(527) in 16S rRNA + S-adenosyl-L-homocysteine. Functionally, specifically methylates the N7 position of guanine in position 527 of 16S rRNA. In Francisella tularensis subsp. holarctica (strain FTNF002-00 / FTA), this protein is Ribosomal RNA small subunit methyltransferase G.